A 638-amino-acid chain; its full sequence is Phosphomethylpyrimidine synthase (638 aa).

Substrate is bound by residues N243, M272, Y301, H337, 357 to 359 (SRG), 398 to 401 (DGLR), and E437. H441 lines the Zn(2+) pocket. Y464 is a substrate binding site. Position 505 (H505) interacts with Zn(2+). 3 residues coordinate [4Fe-4S] cluster: C585, C588, and C593.

The protein belongs to the ThiC family. As to quaternary structure, homodimer. Requires [4Fe-4S] cluster as cofactor.

The enzyme catalyses 5-amino-1-(5-phospho-beta-D-ribosyl)imidazole + S-adenosyl-L-methionine = 4-amino-2-methyl-5-(phosphooxymethyl)pyrimidine + CO + 5'-deoxyadenosine + formate + L-methionine + 3 H(+). It functions in the pathway cofactor biosynthesis; thiamine diphosphate biosynthesis. Functionally, catalyzes the synthesis of the hydroxymethylpyrimidine phosphate (HMP-P) moiety of thiamine from aminoimidazole ribotide (AIR) in a radical S-adenosyl-L-methionine (SAM)-dependent reaction. This Azoarcus sp. (strain BH72) protein is Phosphomethylpyrimidine synthase.